We begin with the raw amino-acid sequence, 284 residues long: UPF0294 protein VV2535 (284 aa).

Belongs to the UPF0294 family.

The protein resides in the cytoplasm. The sequence is that of UPF0294 protein VV2535 from Vibrio vulnificus (strain YJ016).